The chain runs to 279 residues: Probable flavonol synthase 4 (279 aa).

The segment at 1-25 (MEVERDQHKPPLSLQNNKIPSSQNF) is disordered. The span at 13-25 (SLQNNKIPSSQNF) shows a compositional bias: polar residues. One can recognise a Fe2OG dioxygenase domain in the interval 156–256 (GAGYLMKINY…RMSSVVHIKP (101 aa)). 164–166 (NYY) provides a ligand contact to 2-oxoglutarate. 3 residues coordinate Fe cation: H181, D183, and H237. 247–249 (RMS) is a binding site for 2-oxoglutarate.

Belongs to the iron/ascorbate-dependent oxidoreductase family. The cofactor is Fe(2+).

It carries out the reaction a (2R,3R)-dihydroflavonol + 2-oxoglutarate + O2 = a flavonol + succinate + CO2 + H2O. It functions in the pathway secondary metabolite biosynthesis; flavonoid biosynthesis. The sequence is that of Probable flavonol synthase 4 (FLS4) from Arabidopsis thaliana (Mouse-ear cress).